A 116-amino-acid chain; its full sequence is Toxin CSTX-10 (116 aa).

An N-terminal signal peptide occupies residues 1–20 (MKVLVIFAVLSLVIFSNCSA). Positions 21 to 47 (ETDEDFFGEESFEADDIIPFIAKEQVR) are excised as a propeptide. 4 cysteine pairs are disulfide-bonded: Cys53–Cys68, Cys60–Cys77, Cys67–Cys94, and Cys79–Cys92.

In terms of tissue distribution, expressed by the venom gland.

It is found in the secreted. The protein localises to the target cell membrane. Its function is as follows. Spider venom toxin that shows calcium channel blocking activity and exhibits cytolytic activity by affecting the outer leaflet curvature and/or pore formation across the membrane. It blocks L-type calcium channels (Cav1/CACNA1) in mammalian neurons at nanomolar concentrations. Furthermore, it produces a slow voltage-independent block of mid/low and high voltage-activated calcium channels in cockroach neurons. Potassium ions, histamine, M-ctenitoxin-Cs1a (AC P83619), CSTX-9 (AC P58604), and CSTX-13 (AC P83919) synergistically increase the insecticidal activity of this toxin. In vivo, it causes paralysis in blow flies and provokes death in drosophila. The polypeptide is Toxin CSTX-10 (Cupiennius salei (American wandering spider)).